The primary structure comprises 527 residues: Amine oxidase [flavin-containing] A (527 aa).

Met1 carries the post-translational modification N-acetylmethionine. Over 1-497 (MASQEKASMA…HSFWERNLPS (497 aa)) the chain is Cytoplasmic. Residue Ser383 is modified to Phosphoserine. At Cys406 the chain carries S-8alpha-FAD cysteine. A helical; Anchor for type IV membrane protein transmembrane segment spans residues 498–518 (VGGLLKIIGFSTSITALWIVV). The Mitochondrial intermembrane portion of the chain corresponds to 519–527 (YKFKLLTRS). An interaction with membrane phospholipid headgroups region spans residues 520–522 (KFK).

This sequence belongs to the flavin monoamine oxidase family. In terms of assembly, monomer, homo- or heterodimer (containing two subunits of similar size). Each subunit contains a covalently bound flavin. Enzymatically active as monomer. FAD is required as a cofactor.

It localises to the mitochondrion outer membrane. It carries out the reaction a secondary aliphatic amine + O2 + H2O = a primary amine + an aldehyde + H2O2. The enzyme catalyses a primary methyl amine + O2 + H2O = an aldehyde + H2O2 + NH4(+). The catalysed reaction is (R)-adrenaline + O2 + H2O = (R)-3,4-dihydroxymandelaldehyde + methylamine + H2O2. It catalyses the reaction dopamine + O2 + H2O = 3,4-dihydroxyphenylacetaldehyde + H2O2 + NH4(+). It carries out the reaction tyramine + O2 + H2O = (4-hydroxyphenyl)acetaldehyde + H2O2 + NH4(+). The enzyme catalyses (R)-noradrenaline + O2 + H2O = (R)-3,4-dihydroxymandelaldehyde + H2O2 + NH4(+). The catalysed reaction is serotonin + O2 + H2O = (5-hydroxyindol-3-yl)acetaldehyde + H2O2 + NH4(+). It catalyses the reaction kynuramine + O2 + H2O = 3-(2-aminophenyl)-3-oxopropanal + H2O2 + NH4(+). It carries out the reaction tryptamine + O2 + H2O = indole-3-acetaldehyde + H2O2 + NH4(+). The enzyme catalyses 2-phenylethylamine + O2 + H2O = 2-phenylacetaldehyde + H2O2 + NH4(+). Catalyzes the oxidative deamination of primary and some secondary amine such as neurotransmitters, with concomitant reduction of oxygen to hydrogen peroxide and has important functions in the metabolism of neuroactive and vasoactive amines in the central nervous system and peripheral tissues. Preferentially oxidizes serotonin. Also catalyzes the oxidative deamination of kynuramine to 3-(2-aminophenyl)-3-oxopropanal that can spontaneously condense to 4-hydroxyquinoline. This chain is Amine oxidase [flavin-containing] A, found in Equus caballus (Horse).